Here is a 444-residue protein sequence, read N- to C-terminus: Tol-Pal system protein TolB (444 aa).

The signal sequence occupies residues 1–26; it reads MNLFRSLAPMGLALALLLPAAAPALA. The segment covering 287–310 has biased composition (polar residues); it reads ASGTRRQLTNSPSIETAPSYSPDG. Positions 287 to 311 are disordered; sequence ASGTRRQLTNSPSIETAPSYSPDGS.

The protein belongs to the TolB family. In terms of assembly, the Tol-Pal system is composed of five core proteins: the inner membrane proteins TolA, TolQ and TolR, the periplasmic protein TolB and the outer membrane protein Pal. They form a network linking the inner and outer membranes and the peptidoglycan layer.

The protein localises to the periplasm. Part of the Tol-Pal system, which plays a role in outer membrane invagination during cell division and is important for maintaining outer membrane integrity. The protein is Tol-Pal system protein TolB of Cereibacter sphaeroides (strain ATCC 17025 / ATH 2.4.3) (Rhodobacter sphaeroides).